The primary structure comprises 254 residues: Imidazole glycerol phosphate synthase subunit HisF (254 aa).

Residues aspartate 11 and aspartate 130 contribute to the active site.

It belongs to the HisA/HisF family. As to quaternary structure, heterodimer of HisH and HisF.

The protein resides in the cytoplasm. The catalysed reaction is 5-[(5-phospho-1-deoxy-D-ribulos-1-ylimino)methylamino]-1-(5-phospho-beta-D-ribosyl)imidazole-4-carboxamide + L-glutamine = D-erythro-1-(imidazol-4-yl)glycerol 3-phosphate + 5-amino-1-(5-phospho-beta-D-ribosyl)imidazole-4-carboxamide + L-glutamate + H(+). It participates in amino-acid biosynthesis; L-histidine biosynthesis; L-histidine from 5-phospho-alpha-D-ribose 1-diphosphate: step 5/9. In terms of biological role, IGPS catalyzes the conversion of PRFAR and glutamine to IGP, AICAR and glutamate. The HisF subunit catalyzes the cyclization activity that produces IGP and AICAR from PRFAR using the ammonia provided by the HisH subunit. In Gloeobacter violaceus (strain ATCC 29082 / PCC 7421), this protein is Imidazole glycerol phosphate synthase subunit HisF.